Here is a 302-residue protein sequence, read N- to C-terminus: Formylmethanofuran--tetrahydromethanopterin formyltransferase (302 aa).

Belongs to the FTR family. Homotetramer.

Its subcellular location is the cytoplasm. It carries out the reaction N-formylmethanofuran + 5,6,7,8-tetrahydromethanopterin + H(+) = N(5)-formyl-5,6,7,8-tetrahydromethanopterin + methanofuran. It participates in one-carbon metabolism; formaldehyde degradation; formate from formaldehyde (H(4)MPT route): step 4/5. Its function is as follows. Catalyzes the transfer of a formyl group from 5-formyl tetrahydromethanopterin (5-formyl-H(4)MPT) to methanofuran (MFR) to produce formylmethanofuran (formyl-MFR) and tetrahydromethanopterin (H(4)MPT). This Methylobacillus flagellatus (strain ATCC 51484 / DSM 6875 / VKM B-1610 / KT) protein is Formylmethanofuran--tetrahydromethanopterin formyltransferase.